The primary structure comprises 453 residues: tRNA-2-methylthio-N(6)-dimethylallyladenosine synthase (453 aa).

The region spanning 17–135 is the MTTase N-terminal domain; it reads GTFFIETWGC…FPEYLNRAKQ (119 aa). Residues cysteine 26, cysteine 62, cysteine 96, cysteine 172, cysteine 176, and cysteine 179 each coordinate [4Fe-4S] cluster. The Radical SAM core domain maps to 158–388; that stretch reads RKSSTKAFVT…VEVVNKSCEK (231 aa). Residues 391-453 form the TRAM domain; the sequence is KKYQDRIVKV…LSFSLEGEEV (63 aa).

Belongs to the methylthiotransferase family. MiaB subfamily. As to quaternary structure, monomer. The cofactor is [4Fe-4S] cluster.

Its subcellular location is the cytoplasm. It carries out the reaction N(6)-dimethylallyladenosine(37) in tRNA + (sulfur carrier)-SH + AH2 + 2 S-adenosyl-L-methionine = 2-methylsulfanyl-N(6)-dimethylallyladenosine(37) in tRNA + (sulfur carrier)-H + 5'-deoxyadenosine + L-methionine + A + S-adenosyl-L-homocysteine + 2 H(+). Catalyzes the methylthiolation of N6-(dimethylallyl)adenosine (i(6)A), leading to the formation of 2-methylthio-N6-(dimethylallyl)adenosine (ms(2)i(6)A) at position 37 in tRNAs that read codons beginning with uridine. This Clostridium tetani (strain Massachusetts / E88) protein is tRNA-2-methylthio-N(6)-dimethylallyladenosine synthase.